We begin with the raw amino-acid sequence, 915 residues long: Protein O-mannosyl-transferase TMTC3 (915 aa).

At 1–8 (MANINLKE) the chain is on the cytoplasmic side. The helical transmembrane segment at 9–29 (ITLIVGVVTACYWNSLFCGFV) threads the bilayer. Over 30 to 93 (FDDVSAILDN…LSELKPMSYH (64 aa)) the chain is Extracellular. Residues 94–114 (LLNMIFHAVVSVIFLKVCKLF) form a helical membrane-spanning segment. Residues 115–120 (LDNKSS) lie on the Cytoplasmic side of the membrane. A run of 2 helical transmembrane segments spans residues 121-139 (VIAS…AVTG) and 140-158 (VVGR…AFLS). Residues 159–166 (YTRSKGPD) are Cytoplasmic-facing. The chain crosses the membrane as a helical span at residues 167-187 (NSIIWTPIALTVFLVAVATLC). The Extracellular segment spans residues 188-193 (KEQGIT). A helical membrane pass occupies residues 194–214 (VVGICCVYEVFIAQGYTLPLL). Over 215-231 (CTTAGQFLRGKGSIPFS) the chain is Cytoplasmic. The helical transmembrane segment at 232–252 (MLQTLVKLIVLMFSTLLLVVI) threads the bilayer. The Extracellular portion of the chain corresponds to 253-317 (RVQVIQSQLP…TIPLIESLLD (65 aa)). A helical membrane pass occupies residues 318–338 (IRNLATFTFFCFLGMLGVFSI). Residues 339–353 (RYSGDSSKTVLMALC) are Cytoplasmic-facing. The chain crosses the membrane as a helical span at residues 354 to 374 (LMALPFIPASNLFFPVGFVVA). Topologically, residues 375 to 376 (ER) are extracellular. The chain crosses the membrane as a helical span at residues 377-397 (VLYVPSMGFCILVAHGWQKIS). At 398 to 404 (TKSVFKK) the chain is on the cytoplasmic side. The chain crosses the membrane as a helical span at residues 405-423 (LSWICLSMVILTHSLKTFH). At 424-915 (RNWDWESEYT…EEIERILNGE (492 aa)) the chain is on the extracellular side. TPR repeat units lie at residues 446 to 479 (AKLW…QPDD), 480 to 513 (IGAH…MPQI), 529 to 562 (NVYI…RPDF), 563 to 596 (KQAY…DRNN), 597 to 631 (ADLW…NPKH), 669 to 702 (ANGY…QADF), 703 to 736 (RSAL…YPDH), 738 to 771 (KGLI…DPSN), and 772 to 805 (VQGK…APHE). A glycan (N-linked (GlcNAc...) asparagine) is linked at Asn494. Tyr503 bears the Phosphotyrosine mark. A glycan (N-linked (GlcNAc...) asparagine) is linked at Asn541. Residues 848–892 (KEIRGESRQTQIVKTSDNKSQSKSNKQLGKNGDEETPHKTTKDIK) are disordered. A glycan (N-linked (GlcNAc...) asparagine) is linked at Asn865. The span at 865–874 (NKSQSKSNKQ) shows a compositional bias: low complexity. Over residues 878 to 892 (NGDEETPHKTTKDIK) the composition is skewed to basic and acidic residues.

It belongs to the TMTC family.

It localises to the membrane. It is found in the endoplasmic reticulum. It carries out the reaction a di-trans,poly-cis-dolichyl beta-D-mannosyl phosphate + L-seryl-[protein] = 3-O-(alpha-D-mannosyl)-L-seryl-[protein] + a di-trans,poly-cis-dolichyl phosphate + H(+). The enzyme catalyses a di-trans,poly-cis-dolichyl beta-D-mannosyl phosphate + L-threonyl-[protein] = 3-O-(alpha-D-mannosyl)-L-threonyl-[protein] + a di-trans,poly-cis-dolichyl phosphate + H(+). The protein operates within protein modification; protein glycosylation. Its function is as follows. Transfers mannosyl residues to the hydroxyl group of serine or threonine residues. The 4 members of the TMTC family are O-mannosyl-transferases dedicated primarily to the cadherin superfamily, each member seems to have a distinct role in decorating the cadherin domains with O-linked mannose glycans at specific regions. Also acts as O-mannosyl-transferase on other proteins such as PDIA3. Involved in the positive regulation of proteasomal protein degradation in the endoplasmic reticulum (ER), and the control of ER stress response. The sequence is that of Protein O-mannosyl-transferase TMTC3 from Homo sapiens (Human).